We begin with the raw amino-acid sequence, 1011 residues long: Lysosomal alpha-mannosidase (1011 aa).

An N-terminal signal peptide occupies residues 1-49; it reads MGAYARASGVCARGCLDSAGPWTMSRALRPPLPPLCFFLLLLAAAGARA. Intrachain disulfides connect Cys-55/Cys-358 and Cys-268/Cys-273. His-72 and Asp-74 together coordinate Zn(2+). N-linked (GlcNAc...) asparagine glycosylation occurs at Asn-133. Residue Asp-196 participates in Zn(2+) binding. The active-site Nucleophile is Asp-196. N-linked (GlcNAc...) asparagine glycosylation is found at Asn-310 and Asn-367. Disulfide bonds link Cys-412/Cys-472 and Cys-493/Cys-501. His-446 serves as a coordination point for Zn(2+). N-linked (GlcNAc...) asparagine glycosylation is found at Asn-497, Asn-645, Asn-651, Asn-692, Asn-766, Asn-832, Asn-930, and Asn-989.

This sequence belongs to the glycosyl hydrolase 38 family. It depends on Zn(2+) as a cofactor. First processed into 3 peptides of 70 kDa, 42 kDa (D) and 13/15 kDa (E). The 70 kDa peptide is further processed into three peptides (A, B and C). The A, B and C peptides are disulfide-linked. In terms of processing, heavily glycosylated.

It is found in the lysosome. It carries out the reaction Hydrolysis of terminal, non-reducing alpha-D-mannose residues in alpha-D-mannosides.. Necessary for the catabolism of N-linked carbohydrates released during glycoprotein turnover. Cleaves all known types of alpha-mannosidic linkages. This is Lysosomal alpha-mannosidase (MAN2B1) from Homo sapiens (Human).